Reading from the N-terminus, the 431-residue chain is tRNA(Ile)-lysidine synthase (431 aa).

An ATP-binding site is contributed by 19–24; the sequence is STGIDS.

It belongs to the tRNA(Ile)-lysidine synthase family.

Its subcellular location is the cytoplasm. It carries out the reaction cytidine(34) in tRNA(Ile2) + L-lysine + ATP = lysidine(34) in tRNA(Ile2) + AMP + diphosphate + H(+). Its function is as follows. Ligates lysine onto the cytidine present at position 34 of the AUA codon-specific tRNA(Ile) that contains the anticodon CAU, in an ATP-dependent manner. Cytidine is converted to lysidine, thus changing the amino acid specificity of the tRNA from methionine to isoleucine. The protein is tRNA(Ile)-lysidine synthase of Staphylococcus aureus (strain MRSA252).